We begin with the raw amino-acid sequence, 609 residues long: MESRTSRRTFVKGLAAAGVLGGLGLWRSPSWAASGSPALSVLSGTEFDLSIGEMPVNITGRRRTAMAINGGLPGPLLRWKEGDTVTLRVRNRLDAATSIHWHGIILPPNMDGVPGLSFAGIEPGGVYVYQFKVQQNGTYWYHSHSGFQEQVGVYGPLVIEAKEPEPFKYDSEHVVMLTDWTDEDPVSLMRTLKKQSDYYNFHKRTVGDFVNDVADKGWAATVADRKMWAEMKMNPTDLADVSGATYTYLLNGQAPNMNWTGLFRPGEKLRLRFINGSAMTYFDIRIPGLKMTVVASDGQFVNPVEVDELRIAVAETFDVIVEPTAEAYTVFAQSMDRTGYARGTLAVREGLVAQVPPLDPRPLVTMDDMGMGGMDHGSMDGMSGMDSGADDGMQTMSSMGGDSMPAMDHSKMSTMQGMDHGAMSGMDHGAMGGMVMQSHPASENDNPLVDMQAMSPTAKLNDPGLGLRNNGRKVLTYADLKSTFEDPDGREPSRTIELHLTGHMEKFAWSFDGIKFADAQPLILKYGERVRIVLVNDTMMTHPIHLHGMWSDLEDEDGNFRVRKHTIDMPPGSKRSYRVTADALGRWAYHCHLLYHMEMGMFREVRVEE.

Residues 1–32 (MESRTSRRTFVKGLAAAGVLGGLGLWRSPSWA) constitute a signal peptide (tat-type signal). Cu cation-binding residues include His-100, His-102, His-142, and His-144. Tandem repeats lie at residues 367–374 (DDMGMGGM), 375–382 (DHGSMDGM), 408–415 (DHSKMSTM), 419–426 (DHGAMSGM), and 427–434 (DHGAMGGM). Positions 367-434 (DDMGMGGMDH…GMDHGAMGGM (68 aa)) are 5 X 8 AA tandem repeats of D-H-X-X-M-X-G-M. His-542, His-545, His-547, His-590, Cys-591, His-592, His-596, and Met-601 together coordinate Cu cation.

It belongs to the multicopper oxidase family. CopA subfamily. Predicted to be exported by the Tat system. The position of the signal peptide cleavage has been experimentally proven.

It localises to the periplasm. Its function is as follows. Mediates copper resistance by sequestration of copper in the periplasm along with the copper-binding protein CopC. May have oxidase activity. The protein is Copper resistance protein A (copA) of Pseudomonas syringae pv. tomato.